The sequence spans 70 residues: Melittin-N (70 aa).

The signal sequence occupies residues 1–21; that stretch reads MKFLVNVALVFMVVYISYIYA. Residues 22 to 43 constitute a propeptide, removed by a dipeptidylpeptidase; it reads APEPEPAPEPEAEADAEADPEA. At glycine 44 the chain carries N-formylglycine; partial. The residue at position 69 (glutamine 69) is a Glutamine amide.

Belongs to the melittin family. As to quaternary structure, monomer (in solution and for integration into membranes), homotetramer (in solution and potentially as a toroidal pore in membranes), and potenially homomultimer (as a toroidal pore in membranes). Expressed by the venom gland.

It localises to the secreted. The protein resides in the target cell membrane. Functionally, main toxin of bee venom with strong hemolytic activity and antimicrobial activity. It has enhancing effects on bee venom phospholipase A2 activity. This amphipathic toxin binds to negatively charged membrane surface and forms pore by inserting into lipid bilayers inducing the leakage of ions and molecules and the enhancement of permeability that ultimately leads to cell lysis. It acts as a voltage-gated pore with higher selectivity for anions over cations. The ion conductance has been shown to be voltage-dependent. Self-association of melittin in membranes is promoted by high ionic strength, but not by the presence of negatively charged lipids. In vivo, intradermal injection into healthy human volunteers produce sharp pain sensation and an inflammatory response. It produces pain by activating primary nociceptor cells directly and indirectly due to its ability to activate plasma membrane phospholipase A2 and its pore-forming activity. Shows lower cytotoxicity when tested on E.coli and cancer cell lines than melittin, as well as lower anti-inflammatory properties and lower properties to interact to small unilamellar liposomes. In Apis cerana (Indian honeybee), this protein is Melittin-N (MELT).